An 87-amino-acid polypeptide reads, in one-letter code: Tektin-2 (87 aa).

A coiled-coil region spans residues 26 to 55 (VEEELLKEVEVIEATKKALQQRVSQAFQQL).

The protein belongs to the tektin family. In terms of assembly, microtubule inner protein component of sperm flagellar doublet microtubules. May interact with CCDC172. In terms of processing, tyrosine phosphorylated. Ubiquitinated, leading to its degradation. Deubiquitinated by USP16, promoting its stability. Detected in sperm flagella (at protein level).

The protein resides in the cytoplasm. It is found in the cytoskeleton. It localises to the cilium axoneme. Its subcellular location is the flagellum axoneme. The protein localises to the microtubule organizing center. Microtubule inner protein (MIP) part of the dynein-decorated doublet microtubules (DMTs) in cilia and flagellar axoneme. Plays a key role in the assembly or attachment of the inner dynein arm to microtubules in sperm flagella and tracheal cilia. Forms filamentous polymers in the walls of ciliary and flagellar microtubules. This chain is Tektin-2, found in Mesocricetus auratus (Golden hamster).